The sequence spans 139 residues: Small ribosomal subunit protein eS6 (139 aa).

The protein belongs to the eukaryotic ribosomal protein eS6 family.

This is Small ribosomal subunit protein eS6 from Methanosarcina barkeri (strain Fusaro / DSM 804).